The primary structure comprises 406 residues: Tryptophan synthase beta chain (406 aa).

Lys95 carries the N6-(pyridoxal phosphate)lysine modification.

It belongs to the TrpB family. In terms of assembly, tetramer of two alpha and two beta chains. It depends on pyridoxal 5'-phosphate as a cofactor.

It carries out the reaction (1S,2R)-1-C-(indol-3-yl)glycerol 3-phosphate + L-serine = D-glyceraldehyde 3-phosphate + L-tryptophan + H2O. The protein operates within amino-acid biosynthesis; L-tryptophan biosynthesis; L-tryptophan from chorismate: step 5/5. In terms of biological role, the beta subunit is responsible for the synthesis of L-tryptophan from indole and L-serine. The polypeptide is Tryptophan synthase beta chain (Pseudomonas fluorescens (strain ATCC BAA-477 / NRRL B-23932 / Pf-5)).